The primary structure comprises 391 residues: Na(+)/H(+) antiporter NhaA (391 aa).

The next 11 helical transmembrane spans lie at 14–34, 59–79, 95–115, 124–144, 154–174, 177–197, 213–233, 261–281, 287–307, 328–348, and 363–383; these read AGGI…NSPL, LLLW…GLEV, SLPT…YLFF, VGWA…MALL, VFLL…IALF, TDLS…LVAL, IILW…GVVI, FLIL…NVGF, PVPV…VLLF, IAPV…IASL, and IGIL…LSKV.

It belongs to the NhaA Na(+)/H(+) (TC 2.A.33) antiporter family.

The protein localises to the cell inner membrane. It carries out the reaction Na(+)(in) + 2 H(+)(out) = Na(+)(out) + 2 H(+)(in). Na(+)/H(+) antiporter that extrudes sodium in exchange for external protons. This is Na(+)/H(+) antiporter NhaA from Shewanella amazonensis (strain ATCC BAA-1098 / SB2B).